Here is a 190-residue protein sequence, read N- to C-terminus: MLVFIGLGNPGPRYVLTRHNVGFLFVDELLKKFQIGSSYRAETYEAFKLKSQSPAIAVKPLTYMNNSGIAVRDLIRDFGLSQNDRLIVIYDDVWIPLGRLRIRERGSDGGHNGVKSIISSLGTQEFSRIRIGIGPKPDDIDMVSYVLGEFTDSELKVLWKVLDLAISAAQEMFAADFKKVMSRYNSIGVE.

Tyr-14 serves as a coordination point for tRNA. His-19 (proton acceptor) is an active-site residue. Residues Tyr-63, Asn-65, and Asn-112 each coordinate tRNA.

Belongs to the PTH family. Monomer.

It is found in the cytoplasm. It carries out the reaction an N-acyl-L-alpha-aminoacyl-tRNA + H2O = an N-acyl-L-amino acid + a tRNA + H(+). In terms of biological role, hydrolyzes ribosome-free peptidyl-tRNAs (with 1 or more amino acids incorporated), which drop off the ribosome during protein synthesis, or as a result of ribosome stalling. Catalyzes the release of premature peptidyl moieties from peptidyl-tRNA molecules trapped in stalled 50S ribosomal subunits, and thus maintains levels of free tRNAs and 50S ribosomes. This Kosmotoga olearia (strain ATCC BAA-1733 / DSM 21960 / TBF 19.5.1) protein is Peptidyl-tRNA hydrolase.